Reading from the N-terminus, the 64-residue chain is Large ribosomal subunit protein bL35c (64 aa).

This sequence belongs to the bacterial ribosomal protein bL35 family.

It localises to the plastid. It is found in the chloroplast. The chain is Large ribosomal subunit protein bL35c from Phaeodactylum tricornutum (strain CCAP 1055/1).